Reading from the N-terminus, the 336-residue chain is G patch domain and ankyrin repeat-containing protein 1 homolog (336 aa).

2 ANK repeats span residues 123–152 (FGWTALMMAACEGATEAVSWLVQRGVQVET) and 156–185 (SGNTALKLAQRKGHLDVVHLLESLPILEET). The 47-residue stretch at 240–286 (AKNRGLQLMVKQGWDQEHGLGPSQSGRLYPVKTVLRKQRTGLGIEQQ) folds into the G-patch domain.

This chain is G patch domain and ankyrin repeat-containing protein 1 homolog, found in Drosophila melanogaster (Fruit fly).